We begin with the raw amino-acid sequence, 524 residues long: MAVYYPNSVGMQSLYQESIYLNEQQQQQQQASSSSAASFSEIVSGDVRNNEMVFIPPTSDVAVNGNVTVSSNDLSFHGGGLSLSLGNQIQSAVSVSPFQYHYQNLSNQLSYNNLNPSTMSDENGKSLSVHQHHSDQILPSSVYNNNGNNGVGFYNNYRYETSGFVSSVLRSRYLKPTQQLLDEVVSVRKDLKLGNKKMKNDKGQDFHNGSSDNITEDDKSQSQELSPSERQELQSKKSKLLTMVDEVDKRYNQYHHQMEALASSFEMVTGLGAAKPYTSVALNRISRHFRCLRDAIKEQIQVIRGKLGERETSDEQGERIPRLRYLDQRLRQQRALHQQLGMVRPAWRPQRGLPENSVSILRAWLFEHFLHPYPKESEKIMLSKQTGLSKNQVANWFINARVRLWKPMIEEMYKEEFGESAELLSNSNQDTKKMQETSQLKHEDSSSSQQQNQGNNNNNIPYTSDAEQNLVFADPKPDRATTGDYDSLMNYHGFGIDDYNRYVGLGNQQDGRYSNPHQLHDFVV.

Positions 171–187 (SRYLKPTQQLLDEVVSV) are SR/KY domain. Composition is skewed to basic and acidic residues over residues 195–205 (NKKMKNDKGQD) and 216–235 (EDDK…ELQS). A disordered region spans residues 195–236 (NKKMKNDKGQDFHNGSSDNITEDDKSQSQELSPSERQELQSK). Residues 229–300 (ERQELQSKKS…CLRDAIKEQI (72 aa)) form a BELL domain region. A DNA-binding region (homeobox) is located at residues 346 to 408 (AWRPQRGLPE…NARVRLWKPM (63 aa)). A disordered region spans residues 429–463 (QDTKKMQETSQLKHEDSSSSQQQNQGNNNNNIPYT). The segment covering 430–445 (DTKKMQETSQLKHEDS) has biased composition (basic and acidic residues). A compositionally biased stretch (low complexity) spans 446 to 459 (SSSQQQNQGNNNNN).

The protein belongs to the TALE/BELL homeobox family. May form heterodimeric complex with the TALE/KNOX protein STM. Interacts with OFP1, OFP2, OFP3, OFP4, OFP5 and OFP15.

The protein localises to the nucleus. Its function is as follows. Transcription factor that is responsive of the nuclear import of SHOOT MERISTEMLESS (STM). The polypeptide is BEL1-like homeodomain protein 3 (BLH3) (Arabidopsis thaliana (Mouse-ear cress)).